The chain runs to 375 residues: Mitogen-activated protein kinase 4a (375 aa).

Residues 39–325 form the Protein kinase domain; that stretch reads KPPLRPIGRG…VEAALAHPYL (287 aa). ATP contacts are provided by residues 45–53 and lysine 68; that span reads IGRGAYGIV. The active-site Proton acceptor is aspartate 165. The residue at position 197 (threonine 197) is a Phosphothreonine. The TXY motif lies at 197–199; the sequence is TEY. Phosphotyrosine is present on tyrosine 199.

The protein belongs to the protein kinase superfamily. CMGC Ser/Thr protein kinase family. MAP kinase subfamily. Requires Mg(2+) as cofactor. Dually phosphorylated on Thr-197 and Tyr-199, which activates the enzyme. Phosphorylated in response to pathogen-associated molecular pattern (PAMP) chitin and in response to necrotrophic fungus B.cinerea spores. Not phosphorylated in response to osmotic stress. In terms of tissue distribution, expressed strongly in the apical cells of caulonemal air filaments and rhizoids in fully developed plants and less strongly, but readily detectable in filamentous protonemal tissue at the edge of the plant consisting of both chloronema and caulonema. When filamentous growth of protonema is promoted, the expression is strongest in newly formed apical tip cells of protonemal tissue.

It is found in the cytoplasm. The protein resides in the nucleus. It carries out the reaction L-seryl-[protein] + ATP = O-phospho-L-seryl-[protein] + ADP + H(+). The catalysed reaction is L-threonyl-[protein] + ATP = O-phospho-L-threonyl-[protein] + ADP + H(+). Its activity is regulated as follows. Activated by threonine and tyrosine phosphorylation. Activated in response to bacterial and fungal pathogen-associated molecular patterns (PAMPs) including chitin, chitosan and peptidyl glycans (PGNs). Activation in response to chitin requires the CERK1, MEKK1a/b, MKK1a/b/c and MPK4a/b signaling pathway. Activated in response to necrotrophic fungus B.cinerea spores. Not activated in response to osmotic stress. Functionally, the CERK1, MEKK1a/b, MKK1a/b/c and MPK4a/b proteins are involved in pathogen defense. The pathway induces rapid growth inhibition, cell wall depositions and accumulation of defense-related transcripts. This protein is required for innate immunity triggered by pathogen-associated molecular patterns (PAMPs). Involved in resistance to necrotrophic fungi B.cinerea and A.brassicicola. Involved in the transduction of signals from chitosan perception to the activation of defense genes. The protein is Mitogen-activated protein kinase 4a (MPK4a) of Physcomitrium patens (Spreading-leaved earth moss).